A 414-amino-acid chain; its full sequence is CinA-like protein (414 aa).

The protein belongs to the CinA family.

The protein is CinA-like protein of Citrifermentans bemidjiense (strain ATCC BAA-1014 / DSM 16622 / JCM 12645 / Bem) (Geobacter bemidjiensis).